A 1392-amino-acid chain; its full sequence is DNA-directed RNA polymerase subunit beta'' (1392 aa).

Zn(2+) contacts are provided by Cys-224, Cys-295, Cys-302, and Cys-305.

Belongs to the RNA polymerase beta' chain family. RpoC2 subfamily. As to quaternary structure, in plastids the minimal PEP RNA polymerase catalytic core is composed of four subunits: alpha, beta, beta', and beta''. When a (nuclear-encoded) sigma factor is associated with the core the holoenzyme is formed, which can initiate transcription. Zn(2+) is required as a cofactor.

It localises to the plastid. It is found in the chloroplast. It carries out the reaction RNA(n) + a ribonucleoside 5'-triphosphate = RNA(n+1) + diphosphate. Functionally, DNA-dependent RNA polymerase catalyzes the transcription of DNA into RNA using the four ribonucleoside triphosphates as substrates. This is DNA-directed RNA polymerase subunit beta'' from Eucalyptus globulus subsp. globulus (Tasmanian blue gum).